Consider the following 199-residue polypeptide: Cytochrome c oxidase subunit 2 (199 aa).

Residues 1–13 form a helical membrane-spanning segment; it reads AICSLVLYLLTLM. Residues 14–26 lie on the Mitochondrial matrix side of the membrane; it reads LMEKLSSNTVDAQ. A helical transmembrane segment spans residues 27 to 54; sequence EVELIWTILPAIVLILLALPSLQILYMM. Topologically, residues 55–199 are mitochondrial intermembrane; sequence DEIDEPDLTL…SSLLSISSSL (145 aa). 6 residues coordinate Cu cation: His128, Cys163, Glu165, Cys167, His171, and Met174. Glu165 provides a ligand contact to Mg(2+).

This sequence belongs to the cytochrome c oxidase subunit 2 family. In terms of assembly, component of the cytochrome c oxidase (complex IV, CIV), a multisubunit enzyme composed of 14 subunits. The complex is composed of a catalytic core of 3 subunits MT-CO1, MT-CO2 and MT-CO3, encoded in the mitochondrial DNA, and 11 supernumerary subunits COX4I, COX5A, COX5B, COX6A, COX6B, COX6C, COX7A, COX7B, COX7C, COX8 and NDUFA4, which are encoded in the nuclear genome. The complex exists as a monomer or a dimer and forms supercomplexes (SCs) in the inner mitochondrial membrane with NADH-ubiquinone oxidoreductase (complex I, CI) and ubiquinol-cytochrome c oxidoreductase (cytochrome b-c1 complex, complex III, CIII), resulting in different assemblies (supercomplex SCI(1)III(2)IV(1) and megacomplex MCI(2)III(2)IV(2)). Found in a complex with TMEM177, COA6, COX18, COX20, SCO1 and SCO2. Interacts with TMEM177 in a COX20-dependent manner. Interacts with COX20. Interacts with COX16. Requires Cu cation as cofactor.

The protein localises to the mitochondrion inner membrane. It carries out the reaction 4 Fe(II)-[cytochrome c] + O2 + 8 H(+)(in) = 4 Fe(III)-[cytochrome c] + 2 H2O + 4 H(+)(out). In terms of biological role, component of the cytochrome c oxidase, the last enzyme in the mitochondrial electron transport chain which drives oxidative phosphorylation. The respiratory chain contains 3 multisubunit complexes succinate dehydrogenase (complex II, CII), ubiquinol-cytochrome c oxidoreductase (cytochrome b-c1 complex, complex III, CIII) and cytochrome c oxidase (complex IV, CIV), that cooperate to transfer electrons derived from NADH and succinate to molecular oxygen, creating an electrochemical gradient over the inner membrane that drives transmembrane transport and the ATP synthase. Cytochrome c oxidase is the component of the respiratory chain that catalyzes the reduction of oxygen to water. Electrons originating from reduced cytochrome c in the intermembrane space (IMS) are transferred via the dinuclear copper A center (CU(A)) of subunit 2 and heme A of subunit 1 to the active site in subunit 1, a binuclear center (BNC) formed by heme A3 and copper B (CU(B)). The BNC reduces molecular oxygen to 2 water molecules using 4 electrons from cytochrome c in the IMS and 4 protons from the mitochondrial matrix. This Casuarius bennetti (Dwarf cassowary) protein is Cytochrome c oxidase subunit 2 (MT-CO2).